We begin with the raw amino-acid sequence, 273 residues long: Large ribosomal subunit protein uL2 (273 aa).

Disordered stretches follow at residues 28-53 (KPFA…TTRH) and 221-273 (RGTA…RRTK). Over residues 39–48 (KSGGRNNNGR) the composition is skewed to low complexity.

The protein belongs to the universal ribosomal protein uL2 family. As to quaternary structure, part of the 50S ribosomal subunit. Forms a bridge to the 30S subunit in the 70S ribosome.

One of the primary rRNA binding proteins. Required for association of the 30S and 50S subunits to form the 70S ribosome, for tRNA binding and peptide bond formation. It has been suggested to have peptidyltransferase activity; this is somewhat controversial. Makes several contacts with the 16S rRNA in the 70S ribosome. This Pectobacterium atrosepticum (strain SCRI 1043 / ATCC BAA-672) (Erwinia carotovora subsp. atroseptica) protein is Large ribosomal subunit protein uL2.